Consider the following 400-residue polypeptide: Probable tRNA sulfurtransferase (400 aa).

The 105-residue stretch at 60-164 (EPIIEKLKNV…KEATYITSGT (105 aa)) folds into the THUMP domain. Residues 182–183 (LL), 207–208 (HF), R264, G286, and Q295 each bind ATP.

It belongs to the ThiI family.

The protein resides in the cytoplasm. The enzyme catalyses [ThiI sulfur-carrier protein]-S-sulfanyl-L-cysteine + a uridine in tRNA + 2 reduced [2Fe-2S]-[ferredoxin] + ATP + H(+) = [ThiI sulfur-carrier protein]-L-cysteine + a 4-thiouridine in tRNA + 2 oxidized [2Fe-2S]-[ferredoxin] + AMP + diphosphate. It catalyses the reaction [ThiS sulfur-carrier protein]-C-terminal Gly-Gly-AMP + S-sulfanyl-L-cysteinyl-[cysteine desulfurase] + AH2 = [ThiS sulfur-carrier protein]-C-terminal-Gly-aminoethanethioate + L-cysteinyl-[cysteine desulfurase] + A + AMP + 2 H(+). It participates in cofactor biosynthesis; thiamine diphosphate biosynthesis. Functionally, catalyzes the ATP-dependent transfer of a sulfur to tRNA to produce 4-thiouridine in position 8 of tRNAs, which functions as a near-UV photosensor. Also catalyzes the transfer of sulfur to the sulfur carrier protein ThiS, forming ThiS-thiocarboxylate. This is a step in the synthesis of thiazole, in the thiamine biosynthesis pathway. The sulfur is donated as persulfide by IscS. This Oceanobacillus iheyensis (strain DSM 14371 / CIP 107618 / JCM 11309 / KCTC 3954 / HTE831) protein is Probable tRNA sulfurtransferase.